An 88-amino-acid chain; its full sequence is UPF0250 protein PM1928 (88 aa).

Belongs to the UPF0250 family.

This chain is UPF0250 protein PM1928, found in Pasteurella multocida (strain Pm70).